The following is a 155-amino-acid chain: Small ribosomal subunit protein uS7 (155 aa).

The protein belongs to the universal ribosomal protein uS7 family. As to quaternary structure, part of the 30S ribosomal subunit. Contacts proteins S9 and S11.

Its function is as follows. One of the primary rRNA binding proteins, it binds directly to 16S rRNA where it nucleates assembly of the head domain of the 30S subunit. Is located at the subunit interface close to the decoding center, probably blocks exit of the E-site tRNA. The protein is Small ribosomal subunit protein uS7 of Xylella fastidiosa (strain M12).